A 211-amino-acid chain; its full sequence is Probable chemoreceptor glutamine deamidase CheD (211 aa).

Belongs to the CheD family.

It carries out the reaction L-glutaminyl-[protein] + H2O = L-glutamyl-[protein] + NH4(+). Probably deamidates glutamine residues to glutamate on methyl-accepting chemotaxis receptors (MCPs), playing an important role in chemotaxis. The protein is Probable chemoreceptor glutamine deamidase CheD of Hahella chejuensis (strain KCTC 2396).